We begin with the raw amino-acid sequence, 453 residues long: tRNA modification GTPase MnmE (453 aa).

Arginine 22, glutamate 79, and lysine 119 together coordinate (6S)-5-formyl-5,6,7,8-tetrahydrofolate. The 162-residue stretch at glycine 215–glycine 376 folds into the TrmE-type G domain. K(+) is bound at residue asparagine 225. Residues asparagine 225–serine 230, threonine 244–threonine 250, aspartate 269–glycine 272, and asparagine 334–aspartate 337 each bind GTP. Serine 229 contacts Mg(2+). K(+)-binding residues include threonine 244, isoleucine 246, and threonine 249. Residue threonine 250 coordinates Mg(2+). Lysine 453 contributes to the (6S)-5-formyl-5,6,7,8-tetrahydrofolate binding site.

This sequence belongs to the TRAFAC class TrmE-Era-EngA-EngB-Septin-like GTPase superfamily. TrmE GTPase family. Homodimer. Heterotetramer of two MnmE and two MnmG subunits. It depends on K(+) as a cofactor.

It is found in the cytoplasm. Exhibits a very high intrinsic GTPase hydrolysis rate. Involved in the addition of a carboxymethylaminomethyl (cmnm) group at the wobble position (U34) of certain tRNAs, forming tRNA-cmnm(5)s(2)U34. This is tRNA modification GTPase MnmE from Shewanella frigidimarina (strain NCIMB 400).